We begin with the raw amino-acid sequence, 88 residues long: Large ribosomal subunit protein bL27 (88 aa).

Residues 1-22 (MAHKKGASSSRNGRDSNAQRLG) are disordered. Residues 7 to 19 (ASSSRNGRDSNAQ) show a composition bias toward polar residues.

Belongs to the bacterial ribosomal protein bL27 family.

The protein is Large ribosomal subunit protein bL27 of Mycolicibacterium gilvum (strain PYR-GCK) (Mycobacterium gilvum (strain PYR-GCK)).